A 179-amino-acid chain; its full sequence is Large ribosomal subunit protein uL5 (179 aa).

This sequence belongs to the universal ribosomal protein uL5 family. Part of the 50S ribosomal subunit; part of the 5S rRNA/L5/L18/L25 subcomplex. Contacts the 5S rRNA and the P site tRNA. Forms a bridge to the 30S subunit in the 70S ribosome.

In terms of biological role, this is one of the proteins that bind and probably mediate the attachment of the 5S RNA into the large ribosomal subunit, where it forms part of the central protuberance. In the 70S ribosome it contacts protein S13 of the 30S subunit (bridge B1b), connecting the 2 subunits; this bridge is implicated in subunit movement. Contacts the P site tRNA; the 5S rRNA and some of its associated proteins might help stabilize positioning of ribosome-bound tRNAs. This Vibrio vulnificus (strain CMCP6) protein is Large ribosomal subunit protein uL5.